A 347-amino-acid chain; its full sequence is Methylthioribose-1-phosphate isomerase (347 aa).

Substrate is bound by residues 45 to 47 (RGA), arginine 88, and glutamine 197. Aspartate 238 (proton donor) is an active-site residue. Position 248–249 (248–249 (NK)) interacts with substrate.

It belongs to the eIF-2B alpha/beta/delta subunits family. MtnA subfamily.

It catalyses the reaction 5-(methylsulfanyl)-alpha-D-ribose 1-phosphate = 5-(methylsulfanyl)-D-ribulose 1-phosphate. It functions in the pathway amino-acid biosynthesis; L-methionine biosynthesis via salvage pathway; L-methionine from S-methyl-5-thio-alpha-D-ribose 1-phosphate: step 1/6. Catalyzes the interconversion of methylthioribose-1-phosphate (MTR-1-P) into methylthioribulose-1-phosphate (MTRu-1-P). The chain is Methylthioribose-1-phosphate isomerase from Nostoc sp. (strain PCC 7120 / SAG 25.82 / UTEX 2576).